We begin with the raw amino-acid sequence, 295 residues long: Aspartate carbamoyltransferase catalytic subunit (295 aa).

Arginine 54 and threonine 55 together coordinate carbamoyl phosphate. Position 82 (lysine 82) interacts with L-aspartate. The carbamoyl phosphate site is built by arginine 104, histidine 132, and glutamine 135. L-aspartate is bound by residues arginine 165 and arginine 218. 2 residues coordinate carbamoyl phosphate: glycine 257 and proline 258.

The protein belongs to the aspartate/ornithine carbamoyltransferase superfamily. ATCase family. As to quaternary structure, heterododecamer (2C3:3R2) of six catalytic PyrB chains organized as two trimers (C3), and six regulatory PyrI chains organized as three dimers (R2).

It catalyses the reaction carbamoyl phosphate + L-aspartate = N-carbamoyl-L-aspartate + phosphate + H(+). The protein operates within pyrimidine metabolism; UMP biosynthesis via de novo pathway; (S)-dihydroorotate from bicarbonate: step 2/3. Functionally, catalyzes the condensation of carbamoyl phosphate and aspartate to form carbamoyl aspartate and inorganic phosphate, the committed step in the de novo pyrimidine nucleotide biosynthesis pathway. In Wolbachia pipientis wMel, this protein is Aspartate carbamoyltransferase catalytic subunit.